A 224-amino-acid polypeptide reads, in one-letter code: Pyridoxine/pyridoxamine 5'-phosphate oxidase (224 aa).

Substrate is bound by residues 14–17 (REHY) and Lys-76. FMN is bound by residues 71–76 (RTVLMK), 86–87 (YT), Arg-92, Lys-93, and Gln-115. Substrate contacts are provided by Tyr-133, Arg-137, and Ser-141. FMN contacts are provided by residues 150–151 (QS) and Trp-196. Substrate is bound at residue 202 to 204 (RLH). Arg-206 is a binding site for FMN.

It belongs to the pyridoxamine 5'-phosphate oxidase family. Homodimer. FMN is required as a cofactor.

It carries out the reaction pyridoxamine 5'-phosphate + O2 + H2O = pyridoxal 5'-phosphate + H2O2 + NH4(+). It catalyses the reaction pyridoxine 5'-phosphate + O2 = pyridoxal 5'-phosphate + H2O2. The protein operates within cofactor metabolism; pyridoxal 5'-phosphate salvage; pyridoxal 5'-phosphate from pyridoxamine 5'-phosphate: step 1/1. It participates in cofactor metabolism; pyridoxal 5'-phosphate salvage; pyridoxal 5'-phosphate from pyridoxine 5'-phosphate: step 1/1. Its function is as follows. Catalyzes the oxidation of either pyridoxine 5'-phosphate (PNP) or pyridoxamine 5'-phosphate (PMP) into pyridoxal 5'-phosphate (PLP). In Streptomyces avermitilis (strain ATCC 31267 / DSM 46492 / JCM 5070 / NBRC 14893 / NCIMB 12804 / NRRL 8165 / MA-4680), this protein is Pyridoxine/pyridoxamine 5'-phosphate oxidase.